We begin with the raw amino-acid sequence, 469 residues long: UDP-N-acetylmuramate--L-alanine ligase (469 aa).

G119–T125 serves as a coordination point for ATP.

This sequence belongs to the MurCDEF family.

Its subcellular location is the cytoplasm. The catalysed reaction is UDP-N-acetyl-alpha-D-muramate + L-alanine + ATP = UDP-N-acetyl-alpha-D-muramoyl-L-alanine + ADP + phosphate + H(+). It participates in cell wall biogenesis; peptidoglycan biosynthesis. Cell wall formation. This is UDP-N-acetylmuramate--L-alanine ligase from Ruthia magnifica subsp. Calyptogena magnifica.